A 427-amino-acid polypeptide reads, in one-letter code: Imidazolonepropionase (427 aa).

Residues H78 and H80 each contribute to the Fe(3+) site. Zn(2+)-binding residues include H78 and H80. 4-imidazolone-5-propanoate contacts are provided by R87, Y150, and H183. Y150 is a binding site for N-formimidoyl-L-glutamate. Residue H255 coordinates Fe(3+). H255 is a Zn(2+) binding site. Residue E258 coordinates 4-imidazolone-5-propanoate. Fe(3+) is bound at residue D330. D330 serves as a coordination point for Zn(2+). Positions 332 and 334 each coordinate N-formimidoyl-L-glutamate. Residue T335 coordinates 4-imidazolone-5-propanoate.

This sequence belongs to the metallo-dependent hydrolases superfamily. HutI family. Requires Zn(2+) as cofactor. Fe(3+) is required as a cofactor.

It localises to the cytoplasm. It catalyses the reaction 4-imidazolone-5-propanoate + H2O = N-formimidoyl-L-glutamate. Its pathway is amino-acid degradation; L-histidine degradation into L-glutamate; N-formimidoyl-L-glutamate from L-histidine: step 3/3. Its function is as follows. Catalyzes the hydrolytic cleavage of the carbon-nitrogen bond in imidazolone-5-propanoate to yield N-formimidoyl-L-glutamate. It is the third step in the universal histidine degradation pathway. The protein is Imidazolonepropionase of Herpetosiphon aurantiacus (strain ATCC 23779 / DSM 785 / 114-95).